A 61-amino-acid polypeptide reads, in one-letter code: Small ribosomal subunit protein uS14 (61 aa).

Zn(2+) contacts are provided by cysteine 24, cysteine 27, cysteine 40, and cysteine 43.

Belongs to the universal ribosomal protein uS14 family. Zinc-binding uS14 subfamily. In terms of assembly, part of the 30S ribosomal subunit. Contacts proteins S3 and S10. The cofactor is Zn(2+).

Functionally, binds 16S rRNA, required for the assembly of 30S particles and may also be responsible for determining the conformation of the 16S rRNA at the A site. The polypeptide is Small ribosomal subunit protein uS14 (Frankia casuarinae (strain DSM 45818 / CECT 9043 / HFP020203 / CcI3)).